The primary structure comprises 229 residues: Pdp3-interacting factor 1 (229 aa).

Catalysis depends on aspartate 12, which acts as the Nucleophile. Positions 12, 14, and 176 each coordinate Mg(2+). Catalysis depends on aspartate 14, which acts as the Proton donor.

Belongs to the HAD-like hydrolase superfamily. As to quaternary structure, component of the mst2 complex composed of at least eaf6, mst2, nto1, pdp3, ptf1, ptf2 and tfg3. The cofactor is Mg(2+).

It is found in the cytoplasm. The protein localises to the nucleus. The catalysed reaction is D-ribitol 5-phosphate + H2O = ribitol + phosphate. The enzyme catalyses D-sorbitol 6-phosphate + H2O = D-sorbitol + phosphate. It catalyses the reaction sn-glycerol 1-phosphate + H2O = glycerol + phosphate. It carries out the reaction D-erythrose 4-phosphate + H2O = D-erythrose + phosphate. Component of the mst2 complex which is a highly specific H3 lysine 14 (H3K14) acetyltransferase that functions together with gcn5 to regulate global levels of H3K14 acetylation (H3K14ac), critical for DNA damage checkpoint activation. Its function is as follows. May also function as a sugar alcohol (polyol) phosphatase that prevents accumulation of toxic levels of polyol phosphates, which can impair glycolysis by inhibiting glucose-6-phosphate isomerase. This Schizosaccharomyces pombe (strain 972 / ATCC 24843) (Fission yeast) protein is Pdp3-interacting factor 1.